A 217-amino-acid polypeptide reads, in one-letter code: Secreted RxLR effector protein 147 (217 aa).

The signal sequence occupies residues 1–23 (MRGAFYVTTALLITNSIRTAAEA). Residues 22 to 52 (EANPPGRQPMSHHDGVVPGKSSPRRFLQGSH) are disordered. The RxLR-dEER signature appears at 46–67 (RFLQGSHEPHDKFAVSAANEER).

Belongs to the RxLR effector family.

The protein localises to the secreted. The protein resides in the host nucleus. It localises to the host cytoplasm. Functionally, secreted effector that completely suppresses the host cell death induced by cell death-inducing proteins. This is Secreted RxLR effector protein 147 from Plasmopara viticola (Downy mildew of grapevine).